Reading from the N-terminus, the 593-residue chain is Arylsulfatase D (593 aa).

A signal peptide spans 1–33 (MRSAARRGRAAPAARDSLPVLLFLCLLLKTCEP). Positions 49 and 50 each coordinate Ca(2+). N-linked (GlcNAc...) asparagine glycosylation is present at asparagine 61. Ca(2+) is bound at residue cysteine 89. Catalysis depends on cysteine 89, which acts as the Nucleophile. The residue at position 89 (cysteine 89) is a 3-oxoalanine (Cys). N-linked (GlcNAc...) asparagine glycosylation occurs at asparagine 128. Lysine 148 provides a ligand contact to substrate. Histidine 150 is a catalytic residue. Residue histidine 304 participates in substrate binding. An N-linked (GlcNAc...) asparagine glycan is attached at asparagine 347. The Ca(2+) site is built by aspartate 356 and histidine 357. Lysine 381 is a binding site for substrate.

Belongs to the sulfatase family. Requires Ca(2+) as cofactor. In terms of processing, the conversion to 3-oxoalanine (also known as C-formylglycine, FGly), of a serine or cysteine residue in prokaryotes and of a cysteine residue in eukaryotes, is critical for catalytic activity. As to expression, expressed in the pancreas, kidney, liver, lung, placenta, brain and heart.

It localises to the lysosome. The chain is Arylsulfatase D (ARSD) from Homo sapiens (Human).